Reading from the N-terminus, the 420-residue chain is Protein Rv2184c (420 aa).

The protein belongs to the arsA ATPase family.

This is Protein Rv2184c from Mycobacterium tuberculosis (strain ATCC 25618 / H37Rv).